A 1020-amino-acid chain; its full sequence is RNA-binding protein 44 (1020 aa).

Disordered regions lie at residues 1 to 23 (MQAT…GHLQ) and 50 to 70 (DGEG…NSSV). Positions 58–70 (TDERTNVKENSSV) are enriched in basic and acidic residues. A phosphoserine mark is found at Ser249, Ser371, Ser374, Ser516, Ser683, and Ser690. Positions 796–870 (FLIHVGGLCP…KSVNVRLVKI (75 aa)) constitute an RRM domain.

Homodimer. Interacts with TEX14.

It is found in the cytoplasm. Its function is as follows. Component of intercellular bridges during meiosis. Intercellular bridges are evolutionarily conserved structures that connect differentiating germ cells. Not required for fertility. The protein is RNA-binding protein 44 (Rbm44) of Rattus norvegicus (Rat).